The chain runs to 586 residues: Actin-related protein 9 (586 aa).

Residues 141 to 169 are disordered; sequence STPIVDKDADVDPLQRSTPDDTEPNSEEN.

It belongs to the actin family. ARP8 subfamily.

The protein is Actin-related protein 9 (ARP9) of Oryza sativa subsp. japonica (Rice).